A 371-amino-acid chain; its full sequence is Aminomethyltransferase (371 aa).

Belongs to the GcvT family. The glycine cleavage system is composed of four proteins: P, T, L and H.

It catalyses the reaction N(6)-[(R)-S(8)-aminomethyldihydrolipoyl]-L-lysyl-[protein] + (6S)-5,6,7,8-tetrahydrofolate = N(6)-[(R)-dihydrolipoyl]-L-lysyl-[protein] + (6R)-5,10-methylene-5,6,7,8-tetrahydrofolate + NH4(+). In terms of biological role, the glycine cleavage system catalyzes the degradation of glycine. This Pectobacterium carotovorum subsp. carotovorum (strain PC1) protein is Aminomethyltransferase.